The primary structure comprises 459 residues: Probable 3-ketoacyl-CoA synthase 14 (459 aa).

An N-terminal signal peptide occupies residues 1–25; it reads MFIAMADFKLLLLILILLSLFELDL. A helical membrane pass occupies residues 32–52; that stretch reads FFSPFPVKIGLLLISIFFYAY. Residues 52 to 334 enclose the FAE domain; sequence YSTTRSKPVY…FILFLVKSKL (283 aa). Active-site residues include His268, His352, His356, His385, and Asn389.

Belongs to the thiolase-like superfamily. Chalcone/stilbene synthases family. In terms of tissue distribution, expressed in siliques.

The protein localises to the membrane. It catalyses the reaction a very-long-chain acyl-CoA + malonyl-CoA + H(+) = a very-long-chain 3-oxoacyl-CoA + CO2 + CoA. It participates in lipid metabolism; fatty acid biosynthesis. This is Probable 3-ketoacyl-CoA synthase 14 from Arabidopsis thaliana (Mouse-ear cress).